Reading from the N-terminus, the 2128-residue chain is Non-reducing polyketide synthase albA (2128 aa).

Residues 8–244 (YLFGDQTSDI…VKAPIHGPYH (237 aa)) are N-terminal acylcarrier protein transacylase domain (SAT). The Ketosynthase family 3 (KS3) domain maps to 375–806 (NSKIAIIGMS…GGNTALLLED (432 aa)). Active-site for beta-ketoacyl synthase activity residues include cysteine 547, histidine 682, and histidine 724. The segment at 912–1232 (FVFTGQGAQY…LASLHLAGID (321 aa)) is malonyl-CoA:ACP transacylase (MAT) domain. Serine 1001 serves as the catalytic For acyl/malonyl transferase activity. Positions 1286 to 1425 (HEYLTTAAQK…CTVRFFDCAA (140 aa)) are N-terminal hotdog fold. A PKS/mFAS DH domain is found at 1286–1598 (HEYLTTAAQK…FQALSRKILD (313 aa)). Residues 1290–1603 (TTAAQKVIET…RKILDTVLPP (314 aa)) are product template (PT) domain. Histidine 1326 serves as the catalytic Proton acceptor; for dehydratase activity. The C-terminal hotdog fold stretch occupies residues 1452-1598 (DAHRLGRGMV…FQALSRKILD (147 aa)). Residue aspartate 1511 is the Proton donor; for dehydratase activity of the active site. The Carrier 1 domain occupies 1618–1695 (PSAPSLVKRA…DFKQFLAPMS (78 aa)). Serine 1655 bears the O-(pantetheine 4'-phosphoryl)serine mark. Residues 1695-1740 (SQGEASDGSTSDPESSSSFNGGSSTDESSAGSPVSSPPNEKVTQVE) form a disordered region. Over residues 1700 to 1723 (SDGSTSDPESSSSFNGGSSTDESS) the composition is skewed to low complexity. Over residues 1724 to 1740 (AGSPVSSPPNEKVTQVE) the composition is skewed to polar residues. A Carrier 2 domain is found at 1739–1816 (VEQHATIKEI…DVEDALGLKP (78 aa)). At serine 1776 the chain carries O-(pantetheine 4'-phosphoryl)serine. The tract at residues 1854–2126 (SPHPRSTSIL…ELGSFIGNAM (273 aa)) is claisen cyclase domain. Catalysis depends on serine 1944, which acts as the For Claisen cyclase activity.

It catalyses the reaction 6 malonyl-CoA + acetyl-CoA + 6 H(+) = naphtopyrone YWA1 + 6 CO2 + 7 CoA + H2O. Its pathway is secondary metabolite biosynthesis. Functionally, non-reducing polyketide synthase; part of the gene cluster that mediates the biosynthesis of aurasperone B, a dimeric gamma-naphthopyrone. The first step in the biosynthesis of aurasperone B is the production of gamma-naphthopyrone precursor YWA1 by the non-reducing polyketide synthase albA, via condensation of one acetyl-CoA starter unit with 6 malonyl-CoA units. YWA1 is then methylated by aunE at position C-6 to yield foncesin which is further methylated at position C-8 by aunD to produce fonsecin B. A key enzyme in the biosynthetic pathway is the cytochrome P450 monooxygenase aunB which catalyzes the oxidative dimerization of fonsecin B to aurasperone B. AunB also catalyzes the oxidative dimerization of rubrofusarin B into aurasperone A. The chain is Non-reducing polyketide synthase albA from Aspergillus niger (strain ATCC 1015 / CBS 113.46 / FGSC A1144 / LSHB Ac4 / NCTC 3858a / NRRL 328 / USDA 3528.7).